A 118-amino-acid chain; its full sequence is Small ribosomal subunit protein uS13 (118 aa).

Residues 91–118 (HRRGLPVRGQRTKTNARTRKGPRKPIKK) form a disordered region.

The protein belongs to the universal ribosomal protein uS13 family. As to quaternary structure, part of the 30S ribosomal subunit. Forms a loose heterodimer with protein S19. Forms two bridges to the 50S subunit in the 70S ribosome.

Located at the top of the head of the 30S subunit, it contacts several helices of the 16S rRNA. In the 70S ribosome it contacts the 23S rRNA (bridge B1a) and protein L5 of the 50S subunit (bridge B1b), connecting the 2 subunits; these bridges are implicated in subunit movement. Contacts the tRNAs in the A and P-sites. The protein is Small ribosomal subunit protein uS13 of Hamiltonella defensa subsp. Acyrthosiphon pisum (strain 5AT).